The following is a 203-amino-acid chain: Orotate phosphoribosyltransferase (203 aa).

Residues R94, K98, H100, and E120–S128 contribute to the 5-phospho-alpha-D-ribose 1-diphosphate site. S124 is a binding site for orotate.

It belongs to the purine/pyrimidine phosphoribosyltransferase family. PyrE subfamily. As to quaternary structure, homodimer. Mg(2+) serves as cofactor.

It catalyses the reaction orotidine 5'-phosphate + diphosphate = orotate + 5-phospho-alpha-D-ribose 1-diphosphate. It participates in pyrimidine metabolism; UMP biosynthesis via de novo pathway; UMP from orotate: step 1/2. Catalyzes the transfer of a ribosyl phosphate group from 5-phosphoribose 1-diphosphate to orotate, leading to the formation of orotidine monophosphate (OMP). This Staphylococcus aureus (strain COL) protein is Orotate phosphoribosyltransferase.